The following is a 111-amino-acid chain: Large ribosomal subunit protein uL22 (111 aa).

Belongs to the universal ribosomal protein uL22 family. Part of the 50S ribosomal subunit.

In terms of biological role, this protein binds specifically to 23S rRNA; its binding is stimulated by other ribosomal proteins, e.g. L4, L17, and L20. It is important during the early stages of 50S assembly. It makes multiple contacts with different domains of the 23S rRNA in the assembled 50S subunit and ribosome. Functionally, the globular domain of the protein is located near the polypeptide exit tunnel on the outside of the subunit, while an extended beta-hairpin is found that lines the wall of the exit tunnel in the center of the 70S ribosome. In Clostridium tetani (strain Massachusetts / E88), this protein is Large ribosomal subunit protein uL22.